The primary structure comprises 191 residues: Threonylcarbamoyl-AMP synthase (191 aa).

The YrdC-like domain occupies 10–191 (PFRVRHAAAE…DGRSGAYLRR (182 aa)).

Belongs to the SUA5 family. TsaC subfamily.

The protein localises to the cytoplasm. The catalysed reaction is L-threonine + hydrogencarbonate + ATP = L-threonylcarbamoyladenylate + diphosphate + H2O. Functionally, required for the formation of a threonylcarbamoyl group on adenosine at position 37 (t(6)A37) in tRNAs that read codons beginning with adenine. Catalyzes the conversion of L-threonine, HCO(3)(-)/CO(2) and ATP to give threonylcarbamoyl-AMP (TC-AMP) as the acyladenylate intermediate, with the release of diphosphate. The polypeptide is Threonylcarbamoyl-AMP synthase (Halorhodospira halophila (strain DSM 244 / SL1) (Ectothiorhodospira halophila (strain DSM 244 / SL1))).